Reading from the N-terminus, the 207-residue chain is Thiamine-phosphate synthase (207 aa).

Residues 35-39 (QYRDK) and N67 each bind 4-amino-2-methyl-5-(diphosphooxymethyl)pyrimidine. D68 and D86 together coordinate Mg(2+). A 4-amino-2-methyl-5-(diphosphooxymethyl)pyrimidine-binding site is contributed by T105. Residue 132–134 (SVT) participates in 2-[(2R,5Z)-2-carboxy-4-methylthiazol-5(2H)-ylidene]ethyl phosphate binding. K135 is a 4-amino-2-methyl-5-(diphosphooxymethyl)pyrimidine binding site. G162 is a binding site for 2-[(2R,5Z)-2-carboxy-4-methylthiazol-5(2H)-ylidene]ethyl phosphate.

Belongs to the thiamine-phosphate synthase family. Mg(2+) serves as cofactor.

It carries out the reaction 2-[(2R,5Z)-2-carboxy-4-methylthiazol-5(2H)-ylidene]ethyl phosphate + 4-amino-2-methyl-5-(diphosphooxymethyl)pyrimidine + 2 H(+) = thiamine phosphate + CO2 + diphosphate. The catalysed reaction is 2-(2-carboxy-4-methylthiazol-5-yl)ethyl phosphate + 4-amino-2-methyl-5-(diphosphooxymethyl)pyrimidine + 2 H(+) = thiamine phosphate + CO2 + diphosphate. It catalyses the reaction 4-methyl-5-(2-phosphooxyethyl)-thiazole + 4-amino-2-methyl-5-(diphosphooxymethyl)pyrimidine + H(+) = thiamine phosphate + diphosphate. Its pathway is cofactor biosynthesis; thiamine diphosphate biosynthesis; thiamine phosphate from 4-amino-2-methyl-5-diphosphomethylpyrimidine and 4-methyl-5-(2-phosphoethyl)-thiazole: step 1/1. In terms of biological role, condenses 4-methyl-5-(beta-hydroxyethyl)thiazole monophosphate (THZ-P) and 2-methyl-4-amino-5-hydroxymethyl pyrimidine pyrophosphate (HMP-PP) to form thiamine monophosphate (TMP). This Pseudomonas putida (strain GB-1) protein is Thiamine-phosphate synthase.